The following is a 474-amino-acid chain: Glutamate--tRNA ligase (474 aa).

The short motif at proline 11–glycine 21 is the 'HIGH' region element. Positions lysine 240 to arginine 244 match the 'KMSKS' region motif. Lysine 243 is a binding site for ATP.

This sequence belongs to the class-I aminoacyl-tRNA synthetase family. Glutamate--tRNA ligase type 1 subfamily. Monomer.

It localises to the cytoplasm. It catalyses the reaction tRNA(Glu) + L-glutamate + ATP = L-glutamyl-tRNA(Glu) + AMP + diphosphate. Its function is as follows. Catalyzes the attachment of glutamate to tRNA(Glu) in a two-step reaction: glutamate is first activated by ATP to form Glu-AMP and then transferred to the acceptor end of tRNA(Glu). This is Glutamate--tRNA ligase from Nitrobacter winogradskyi (strain ATCC 25391 / DSM 10237 / CIP 104748 / NCIMB 11846 / Nb-255).